The following is a 203-amino-acid chain: Imidazole glycerol phosphate synthase subunit HisH (203 aa).

One can recognise a Glutamine amidotransferase type-1 domain in the interval 1 to 203 (MIGIIDYGMG…KNFGEMIKCL (203 aa)). The active-site Nucleophile is C79. Active-site residues include H181 and E183.

As to quaternary structure, heterodimer of HisH and HisF.

It is found in the cytoplasm. It catalyses the reaction 5-[(5-phospho-1-deoxy-D-ribulos-1-ylimino)methylamino]-1-(5-phospho-beta-D-ribosyl)imidazole-4-carboxamide + L-glutamine = D-erythro-1-(imidazol-4-yl)glycerol 3-phosphate + 5-amino-1-(5-phospho-beta-D-ribosyl)imidazole-4-carboxamide + L-glutamate + H(+). It carries out the reaction L-glutamine + H2O = L-glutamate + NH4(+). It participates in amino-acid biosynthesis; L-histidine biosynthesis; L-histidine from 5-phospho-alpha-D-ribose 1-diphosphate: step 5/9. In terms of biological role, IGPS catalyzes the conversion of PRFAR and glutamine to IGP, AICAR and glutamate. The HisH subunit catalyzes the hydrolysis of glutamine to glutamate and ammonia as part of the synthesis of IGP and AICAR. The resulting ammonia molecule is channeled to the active site of HisF. In Caldanaerobacter subterraneus subsp. tengcongensis (strain DSM 15242 / JCM 11007 / NBRC 100824 / MB4) (Thermoanaerobacter tengcongensis), this protein is Imidazole glycerol phosphate synthase subunit HisH.